We begin with the raw amino-acid sequence, 438 residues long: Beta-1,3-galactosyl-O-glycosyl-glycoprotein beta-1,6-N-acetylglucosaminyltransferase 3 (438 aa).

The Cytoplasmic portion of the chain corresponds to 1 to 6 (MVQWKR). The helical; Signal-anchor for type II membrane protein transmembrane segment at 7–26 (LCQLHYLWALGCYMLLATVA) threads the bilayer. The Lumenal portion of the chain corresponds to 27–438 (LKLSFRLKCD…RYKAIYGTEL (412 aa)). 4 disulfides stabilise this stretch: cysteine 70–cysteine 227, cysteine 161–cysteine 382, cysteine 182–cysteine 209, and cysteine 391–cysteine 423. Residue asparagine 289 is glycosylated (N-linked (GlcNAc...) asparagine).

Belongs to the glycosyltransferase 14 family. Post-translationally, N-glycosylated. As to expression, primarily expressed in mucus-secreting tissues. Expressed in colon, kidney, small intestine, trachea, and stomach, where mucin is produced.

Its subcellular location is the golgi apparatus membrane. It catalyses the reaction a 3-O-[beta-D-galactosyl-(1-&gt;3)-N-acetyl-alpha-D-galactosaminyl]-L-seryl-[protein] + UDP-N-acetyl-alpha-D-glucosamine = 3-O-{beta-D-galactosyl-(1-&gt;3)-[N-acetyl-beta-D-glucosaminyl-(1-&gt;6)]-N-acetyl-alpha-D-galactosaminyl}-L-seryl-[protein] + UDP + H(+). The catalysed reaction is a 3-O-[beta-D-galactosyl-(1-&gt;3)-N-acetyl-alpha-D-galactosaminyl]-L-threonyl-[protein] + UDP-N-acetyl-alpha-D-glucosamine = a 3-O-{beta-D-galactosyl-(1-&gt;3)-[N-acetyl-beta-D-glucosaminyl-(1-&gt;6)]-N-acetyl-alpha-D-galactosaminyl}-L-threonyl-[protein] + UDP + H(+). The enzyme catalyses a beta-D-Gal-(1-&gt;4)-beta-D-GlcNAc-(1-&gt;3)-beta-D-Gal-(1-&gt;4)-beta-D-GlcNAc derivative + UDP-N-acetyl-alpha-D-glucosamine = a beta-D-Gal-(1-&gt;4)-beta-D-GlcNAc-(1-&gt;3)-[beta-D-GlcNAc-(1-&gt;6)]-beta-D-Gal-(1-&gt;4)-N-acetyl-beta-D-glucosaminyl derivative + UDP + H(+). It carries out the reaction 3-O-[N-acetyl-beta-D-glucosaminyl-(1-&gt;3)-N-acetyl-alpha-D-galactosaminyl]-L-seryl-[protein] + UDP-N-acetyl-alpha-D-glucosamine = 3-O-[N-acetyl-beta-D-glucosaminyl-(1-&gt;3)-[N-acetyl-beta-D-glucosaminyl-(1-&gt;6)]-N-acetyl-alpha-D-galactosaminyl]-L-seryl-[protein] + UDP + H(+). It catalyses the reaction a 3-O-[N-acetyl-beta-D-glucosaminyl-(1-&gt;3)-N-acetyl-alpha-D-galactosaminyl]-L-threonyl-[protein] + UDP-N-acetyl-alpha-D-glucosamine = 3-O-[N-acetyl-beta-D-glucosaminyl-(1-&gt;3)-[N-acetyl-beta-D-glucosaminyl-(1-&gt;6)]-N-acetyl-alpha-D-galactosaminyl]-L-threonyl-[protein] + UDP + H(+). It participates in protein modification; protein glycosylation. Functionally, glycosyltransferase that can synthesize all known mucin beta 6 N-acetylglucosaminides. Mediates core 2 and core 4 O-glycan branching, 2 important steps in mucin-type biosynthesis. Also has I-branching enzyme activity by converting linear into branched poly-N-acetyllactosaminoglycans, leading to introduce the blood group I antigen during embryonic development. The chain is Beta-1,3-galactosyl-O-glycosyl-glycoprotein beta-1,6-N-acetylglucosaminyltransferase 3 (GCNT3) from Homo sapiens (Human).